Reading from the N-terminus, the 108-residue chain is Ig kappa chain V-VI region NQ2-6.1 (108 aa).

Residues 1–23 (QILLTQSPAIMSASPGQKVTMTC) are framework-1. Cysteine 23 and cysteine 87 are oxidised to a cystine. The tract at residues 24–33 (SASSSVSYMY) is complementarity-determining-1. Residues 34–48 (WYQQKPGSSPRLLIY) form a framework-2 region. Residues 49–55 (DTSNLAS) form a complementarity-determining-2 region. The tract at residues 56-87 (GVPVRFSGSGSATSYSLTITRMQAEDAATYYC) is framework-3. A complementarity-determining-3 region spans residues 88 to 98 (QQWSSYPPMLT). A framework-4 region spans residues 99–108 (FGAGTKLELK).

This Mus musculus (Mouse) protein is Ig kappa chain V-VI region NQ2-6.1.